The following is an 818-amino-acid chain: Catenin beta (818 aa).

Composition is skewed to polar residues over residues 1–21 (METY…TPQG) and 48–66 (GDSG…SVSS). Disordered stretches follow at residues 1 to 24 (METY…GQYM) and 48 to 71 (GDSG…HGLD). ARM repeat units follow at residues 164–203 (NYQD…QLSK), 248–287 (RQGL…NLLL), 412–451 (DAAT…NLTC), 454–495 (QRNK…HLTS), 501–541 (EMAQ…NLAL), 543–582 (PANH…NTSA), and 648–687 (KEGA…RMSE). Residues 732–818 (QGFRGYQGSG…QMAAWFDTDL (87 aa)) form a disordered region.

This sequence belongs to the beta-catenin family.

The protein localises to the cytoplasm. It is found in the cytoskeleton. Binds to the cytoplasmic domain of the cell-cell adhesion molecule E-cadherin, and perhaps to other (membrane) proteins. The association of catenins to cadherins produces a complex which is linked to the actin filament network, and which seems to be of primary importance for cadherins cell-adhesion properties. This is Catenin beta from Urechis caupo (Innkeeper worm).